Reading from the N-terminus, the 132-residue chain is Peptide methionine sulfoxide reductase MsrB (132 aa).

Positions 8–130 (LDSWREELTE…NSASLKLVPR (123 aa)) constitute a MsrB domain. The Zn(2+) site is built by cysteine 47, cysteine 50, cysteine 96, and cysteine 99. The Nucleophile role is filled by cysteine 119.

Belongs to the MsrB Met sulfoxide reductase family. It depends on Zn(2+) as a cofactor.

The enzyme catalyses L-methionyl-[protein] + [thioredoxin]-disulfide + H2O = L-methionyl-(R)-S-oxide-[protein] + [thioredoxin]-dithiol. The sequence is that of Peptide methionine sulfoxide reductase MsrB from Pseudomonas aeruginosa (strain UCBPP-PA14).